A 367-amino-acid chain; its full sequence is Alanine racemase (367 aa).

Catalysis depends on lysine 40, which acts as the Proton acceptor; specific for D-alanine. Lysine 40 bears the N6-(pyridoxal phosphate)lysine mark. Arginine 136 lines the substrate pocket. Tyrosine 263 (proton acceptor; specific for L-alanine) is an active-site residue. Methionine 310 contributes to the substrate binding site.

The protein belongs to the alanine racemase family. Requires pyridoxal 5'-phosphate as cofactor.

It catalyses the reaction L-alanine = D-alanine. The protein operates within amino-acid biosynthesis; D-alanine biosynthesis; D-alanine from L-alanine: step 1/1. In terms of biological role, catalyzes the interconversion of L-alanine and D-alanine. May also act on other amino acids. This Streptococcus pneumoniae (strain Hungary19A-6) protein is Alanine racemase (alr).